A 476-amino-acid chain; its full sequence is Protein transport protein Sec61 subunit alpha isoform 2 (476 aa).

Over 1–33 (MGIKFLEVIKPFCAVLPEIQKPERKIQFREKVL) the chain is Cytoplasmic. Residues 34 to 53 (WTAITLFIFLVCCQIPLFGI) traverse the membrane as a helical segment. Residues 54-76 (MSSDSADPFYWMRVILASNRGTL) are Lumenal-facing. A helical membrane pass occupies residues 77 to 96 (MELGISPIVTSGLIMQLLAG). The Cytoplasmic segment spans residues 97-117 (AKIIEVGDTPKDRALFNGAQK). The chain crosses the membrane as a helical span at residues 118–138 (LFGMIITIGQAIVYVMTGMYG). The Lumenal segment spans residues 139–144 (DPAEMG). The helical transmembrane segment at 145 to 165 (AGICLLIIIQLFVAGLIVLLL) threads the bilayer. At 166 to 172 (DELLQKG) the chain is on the cytoplasmic side. The chain crosses the membrane as a helical span at residues 173 to 193 (YGLGSGISLFIATNICETIVW). The Lumenal segment spans residues 194–240 (KAFSPTTINTGRGTEFEGAVIALFHLLATRTDKVRALREAFYRQNLP). Residues 241–261 (NLMNLIATVFVFAVVIYFQGF) traverse the membrane as a helical segment. Residues 262–288 (RVDLPIKSARYRGQYSSYPIKLFYTSN) lie on the Cytoplasmic side of the membrane. A helical membrane pass occupies residues 289–309 (IPIILQSALVSNLYVISQMLS). The Lumenal portion of the chain corresponds to 310 to 354 (VRFSGNFLVNLLGQWADVSGGGPARSYPVGGLCYYLSPPESMGAI). A helical transmembrane segment spans residues 355 to 375 (FEDPVHVVVYIIFMLGSCAFF). At 376 to 420 (SKTWIEVSGSSAKDVAKQLKEQQMVMRGHRDTSMVHELNRYIPTA) the chain is on the cytoplasmic side. Residues 421–441 (AAFGGLCIGALSVLADFLGAI) traverse the membrane as a helical segment. At 442–445 (GSGT) the chain is on the lumenal side. Residues 446–462 (GILLAVTIIYQYFEIFV) form a helical membrane-spanning segment. The Cytoplasmic portion of the chain corresponds to 463-476 (KEQAEVGGMGALFF).

This sequence belongs to the SecY/SEC61-alpha family. As to quaternary structure, the SEC61 channel-forming translocon complex consists of channel-forming core components SEC61A1, SEC61B and SEC61G and different auxiliary components such as SEC62 and SEC63.

It is found in the endoplasmic reticulum membrane. Component of SEC61 channel-forming translocon complex that mediates transport of signal peptide-containing precursor polypeptides across the endoplasmic reticulum (ER). Forms a ribosome receptor and a gated pore in the ER membrane, both functions required for cotranslational translocation of nascent polypeptides. The polypeptide is Protein transport protein Sec61 subunit alpha isoform 2 (SEC61A2) (Homo sapiens (Human)).